Reading from the N-terminus, the 351-residue chain is Penicillolysin (351 aa).

The N-terminal stretch at 1-19 (MRFTTLSTAFLALAQNVYA) is a signal peptide. The propeptide occupies 20–174 (FPIESDLSAL…TKALKPLDRR (155 aa)). 2 N-linked (GlcNAc...) asparagine glycosylation sites follow: Asn52 and Asn181. His302 serves as a coordination point for Zn(2+). Glu303 is an active-site residue. Zn(2+) contacts are provided by His306 and Asp317.

This sequence belongs to the peptidase M35 family. Requires Zn(2+) as cofactor.

The enzyme catalyses Preferential cleavage of bonds with hydrophobic residues in P1'. Also 3-Asn-|-Gln-4 and 8-Gly-|-Ser-9 bonds in insulin B chain.. This is Penicillolysin (plnC) from Penicillium citrinum.